Here is a 179-residue protein sequence, read N- to C-terminus: Large ribosomal subunit protein uL5 (179 aa).

It belongs to the universal ribosomal protein uL5 family. Part of the 50S ribosomal subunit; part of the 5S rRNA/L5/L18/L25 subcomplex. Contacts the 5S rRNA and the P site tRNA. Forms a bridge to the 30S subunit in the 70S ribosome.

This is one of the proteins that bind and probably mediate the attachment of the 5S RNA into the large ribosomal subunit, where it forms part of the central protuberance. In the 70S ribosome it contacts protein S13 of the 30S subunit (bridge B1b), connecting the 2 subunits; this bridge is implicated in subunit movement. Contacts the P site tRNA; the 5S rRNA and some of its associated proteins might help stabilize positioning of ribosome-bound tRNAs. This chain is Large ribosomal subunit protein uL5, found in Xylella fastidiosa (strain 9a5c).